A 351-amino-acid polypeptide reads, in one-letter code: MSLQWWRDTCREADPQMRRRAAERQDRLTKPRGSLGRLEQVAIDLAALQGRERPSLERIWVTVFAGDHGVVAEGISAYPQAVTGEMLRNFVRGGAAISVLARELGAGLEVVDLGTAFPLEALPGVRHLRLAAGTANFVEAPAMGAEECLLALEAGRESVRRAEQAGSQLFIGGEMGIGNTTAAAAMACALLDAPASALVGPGTGLDASGVAHKAAVIERALALHGAHRADPFETLRRLGGLEIAALAGAYLACAQKGMVALVDGYICSVAALCAVRLNPACRDWLLFAHSGAEPGHRHVLEALAAQPLLDLGLRLGEGSGAALAVPLLRQACALHAGMATFAEAAVSDRPA.

Glu-317 (proton acceptor) is an active-site residue.

It belongs to the CobT family.

It catalyses the reaction 5,6-dimethylbenzimidazole + nicotinate beta-D-ribonucleotide = alpha-ribazole 5'-phosphate + nicotinate + H(+). Its pathway is nucleoside biosynthesis; alpha-ribazole biosynthesis; alpha-ribazole from 5,6-dimethylbenzimidazole: step 1/2. In terms of biological role, catalyzes the synthesis of alpha-ribazole-5'-phosphate from nicotinate mononucleotide (NAMN) and 5,6-dimethylbenzimidazole (DMB). This chain is Nicotinate-nucleotide--dimethylbenzimidazole phosphoribosyltransferase, found in Pseudomonas aeruginosa (strain ATCC 15692 / DSM 22644 / CIP 104116 / JCM 14847 / LMG 12228 / 1C / PRS 101 / PAO1).